The primary structure comprises 609 residues: Protein tesmin/TSO1-like CXC 3 (609 aa).

Basic and acidic residues predominate over residues 69 to 84 (ESRFRSQKDVSASKEV). Disordered stretches follow at residues 69–102 (ESRF…YKND), 307–328 (PISP…SSCK), 457–477 (LFEQ…KTQQ), and 569–609 (NSKR…TPHH). One can recognise a CRC domain in the interval 326 to 451 (SCKRCNCKKS…RCEGCKNAFG (126 aa)). The segment covering 466 to 477 (TSGTPGTKKTQQ) has biased composition (polar residues).

This sequence belongs to the lin-54 family. In terms of tissue distribution, ubiquitous but expressed mostly in flowers and at significant levels in leaves. Detected with highest levels in developing ovules and microspores, and in petals.

The protein localises to the nucleus. Its function is as follows. Plays a role in development of both male and female reproductive tissues. The polypeptide is Protein tesmin/TSO1-like CXC 3 (TCX3) (Arabidopsis thaliana (Mouse-ear cress)).